We begin with the raw amino-acid sequence, 129 residues long: Trefoil factor 2 (129 aa).

The first 23 residues, 1–23, serve as a signal peptide directing secretion; that stretch reads MGPRGAPLLVVVLVLGLHALAEG. P-type domains follow at residues 29-73 and 79-122; these read CRCS…FHPL and EQCV…FFPQ. Intrachain disulfides connect Cys29-Cys127, Cys31-Cys58, Cys42-Cys57, Cys52-Cys69, Cys81-Cys107, Cys91-Cys106, and Cys101-Cys118.

Expressed in the digestive tract, where it was found predominantly in the stomach with highest expression in the antrum. It is secreted predominantly from antral mucous cells into the lumen of the gastrointestinal tract.

It is found in the secreted. In terms of biological role, inhibits gastrointestinal motility and gastric acid secretion. Could function as a structural component of gastric mucus, possibly by stabilizing glycoproteins in the mucus gel through interactions with carbohydrate side chains. The sequence is that of Trefoil factor 2 (Tff2) from Rattus norvegicus (Rat).